Reading from the N-terminus, the 280-residue chain is Bifunctional protein FolD (280 aa).

Residues 158–160 (GES), isoleucine 183, and isoleucine 222 contribute to the NADP(+) site.

This sequence belongs to the tetrahydrofolate dehydrogenase/cyclohydrolase family. Homodimer.

The catalysed reaction is (6R)-5,10-methylene-5,6,7,8-tetrahydrofolate + NADP(+) = (6R)-5,10-methenyltetrahydrofolate + NADPH. It catalyses the reaction (6R)-5,10-methenyltetrahydrofolate + H2O = (6R)-10-formyltetrahydrofolate + H(+). It participates in one-carbon metabolism; tetrahydrofolate interconversion. In terms of biological role, catalyzes the oxidation of 5,10-methylenetetrahydrofolate to 5,10-methenyltetrahydrofolate and then the hydrolysis of 5,10-methenyltetrahydrofolate to 10-formyltetrahydrofolate. This chain is Bifunctional protein FolD, found in Mycoplasma mobile (strain ATCC 43663 / 163K / NCTC 11711) (Mesomycoplasma mobile).